The primary structure comprises 424 residues: MPAILDVRGREVLDSRGNPTVEAEVYLEDGSVGRAIVPSGASTGSREALELRDNDPKRYKGKGVLQAVKNINEIIAQELIGLEALDQYTVDKTMIELDGTENKSRLGANAILAVSLATARAAAASLGVPLYLYLGGVQARELPTPLMNVINGGKHADNPLDFQEYMIVPLASTFKESLRWAVEVFHTLKSILKSKGLNTNVGDEGGFAPYLEKNEDPLAILVEAIQKAGFEPGKDVALALDLAASEFYENGKYILKAEGKELTSDEMISFLEYLCDKYPIVSIEDGLSEKDWDGWKKLTDKLGKRVQLVGDDIFVTNPKILAEGIEKGIANAILVKVNQIGSLTETLDTIRIAHQAGYRTVISHRSGETEDTFIADLSVAVNSGQIKTGSLSRTDRIAKYNQLLRIEEELGEAALYRGILNFKR.

A (2R)-2-phosphoglycerate-binding site is contributed by Q163. E204 (proton donor) is an active-site residue. The Mg(2+) site is built by D241, E284, and D311. The (2R)-2-phosphoglycerate site is built by K336, R365, S366, and K387. Residue K336 is the Proton acceptor of the active site.

The protein belongs to the enolase family. Mg(2+) is required as a cofactor.

The protein resides in the cytoplasm. Its subcellular location is the secreted. It is found in the cell surface. The catalysed reaction is (2R)-2-phosphoglycerate = phosphoenolpyruvate + H2O. The protein operates within carbohydrate degradation; glycolysis; pyruvate from D-glyceraldehyde 3-phosphate: step 4/5. Its function is as follows. Catalyzes the reversible conversion of 2-phosphoglycerate (2-PG) into phosphoenolpyruvate (PEP). It is essential for the degradation of carbohydrates via glycolysis. This is Enolase from Dictyoglomus thermophilum (strain ATCC 35947 / DSM 3960 / H-6-12).